We begin with the raw amino-acid sequence, 600 residues long: Pentatricopeptide repeat-containing protein At3g29230 (600 aa).

PPR repeat units follow at residues 50–80 (DLHI…VQEP), 81–115 (NVHL…GLFA), 116–150 (DNFT…GLSS), 151–183 (DIYV…MSER), 184–218 (DTVS…DLIS), 219–245 (WNTM…MPER), 246–276 (NTVS…MPLP), 279–313 (NVVT…GLKF), 314–348 (DAAA…NLGS), 349–379 (NAYV…IPKK), 380–414 (DLVS…GIRP), 415–445 (DKVT…MEKV), and 451–481 (QVEH…MPME). The interval 486–561 (IWGALLGACR…PSGASSVELE (76 aa)) is type E motif. The interval 562–592 (DGIHEFTVFDKSHPKSDQIYQMLGSLIEPPD) is type E(+) motif.

This sequence belongs to the PPR family. PCMP-E subfamily.

The sequence is that of Pentatricopeptide repeat-containing protein At3g29230 (PCMP-E27) from Arabidopsis thaliana (Mouse-ear cress).